We begin with the raw amino-acid sequence, 182 residues long: Large ribosomal subunit protein bL25 (182 aa).

This sequence belongs to the bacterial ribosomal protein bL25 family. CTC subfamily. As to quaternary structure, part of the 50S ribosomal subunit; part of the 5S rRNA/L5/L18/L25 subcomplex. Contacts the 5S rRNA. Binds to the 5S rRNA independently of L5 and L18.

Its function is as follows. This is one of the proteins that binds to the 5S RNA in the ribosome where it forms part of the central protuberance. This is Large ribosomal subunit protein bL25 from Borrelia hermsii (strain HS1 / DAH).